The following is a 149-amino-acid chain: Large ribosomal subunit protein bL9 (149 aa).

Belongs to the bacterial ribosomal protein bL9 family.

Binds to the 23S rRNA. This is Large ribosomal subunit protein bL9 from Rubrobacter xylanophilus (strain DSM 9941 / JCM 11954 / NBRC 16129 / PRD-1).